Reading from the N-terminus, the 53-residue chain is HOXB-AS3 peptide (53 aa).

The disordered stretch occupies residues 1-53 (MPVLPGTQRYPHQRRRFQAAGGGAESGKRGSEEAPGVAWSGSESGRDAATPAW).

In terms of assembly, interacts with HNRNPA1 (via the RGG-box). Interacts with IGF2BP2.

Blocks the binding of HNRNPA1 to the intronic sequences flanking exon 9 of the PKM gene by competitively binding to the HNRNPA1 RGG-box motif. This inhibits inclusion of exon 9 and promotes inclusion of exon 10, suppressing formation of the PKM M2 isoform and promoting production of the M1 isoform. Also suppresses HNRNPA1-mediated processing of microRNA 18a (miR-18a). Promotes MYC stability through interaction with IGF2BP2. This Homo sapiens (Human) protein is HOXB-AS3 peptide.